Here is a 614-residue protein sequence, read N- to C-terminus: Acetylcholinesterase (614 aa).

A signal peptide spans Met1–Ala31. A disulfide bridge connects residues Cys100 and Cys127. Position 117 (Trp117) interacts with galanthamine. Trp117 is a huperzine A binding site. Gly153 is a huprine W binding site. A huperzine A-binding site is contributed by Tyr164. Glu233–Ser234 contributes to the galanthamine binding site. Huprine W is bound at residue Ser234. Ser234 acts as the Acyl-ester intermediate in catalysis. The cysteines at positions 288 and 303 are disulfide-linked. Asn296 carries N-linked (GlcNAc...) asparagine glycosylation. Glu365 functions as the Charge relay system in the catalytic mechanism. A galanthamine-binding site is contributed by Tyr368. Tyr368 provides a ligand contact to huperzine A. Asn381 is a glycosylation site (N-linked (GlcNAc...) asparagine). An intrachain disulfide couples Cys440 to Cys560. Positions 470 and 478 each coordinate huprine W. Residue His478 is the Charge relay system of the active site. N-linked (GlcNAc...) asparagine glycosylation is present at Asn495. Phe588 carries the GPI-anchor amidated glycine lipid modification.

The protein belongs to the type-B carboxylesterase/lipase family. As to quaternary structure, interacts with PRIMA1. The interaction with PRIMA1 is required to anchor it to the basal lamina of cells and organize into tetramers. Isoform H generates GPI-anchored dimers; disulfide linked. Isoform T generates multiple structures, ranging from monomers and dimers to collagen-tailed and hydrophobic-tailed forms, in which catalytic tetramers are associated with anchoring proteins that attach them to the basal lamina or to cell membranes. In the collagen-tailed forms, isoform T subunits are associated with a specific collagen, COLQ, which triggers the formation of isoform T tetramers, from monomers and dimers. Isoform R may be monomeric. Isoform H is highly expressed in erythrocytes.

Its subcellular location is the synapse. It localises to the secreted. It is found in the cell membrane. The protein localises to the nucleus. The enzyme catalyses acetylcholine + H2O = choline + acetate + H(+). Functionally, hydrolyzes rapidly the acetylcholine neurotransmitter released into the synaptic cleft allowing to terminate the signal transduction at the neuromuscular junction. Role in neuronal apoptosis. This is Acetylcholinesterase from Homo sapiens (Human).